Reading from the N-terminus, the 370-residue chain is Quinolinate synthase (370 aa).

Residues histidine 62 and serine 83 each coordinate iminosuccinate. Position 128 (cysteine 128) interacts with [4Fe-4S] cluster. Residues 154–156 (YAN) and serine 171 each bind iminosuccinate. Cysteine 215 serves as a coordination point for [4Fe-4S] cluster. Residues 241 to 243 (HPE) and threonine 258 contribute to the iminosuccinate site. A [4Fe-4S] cluster-binding site is contributed by cysteine 312.

This sequence belongs to the quinolinate synthase family. Type 1 subfamily. It depends on [4Fe-4S] cluster as a cofactor.

The protein resides in the cytoplasm. It catalyses the reaction iminosuccinate + dihydroxyacetone phosphate = quinolinate + phosphate + 2 H2O + H(+). It functions in the pathway cofactor biosynthesis; NAD(+) biosynthesis; quinolinate from iminoaspartate: step 1/1. Its function is as follows. Catalyzes the condensation of iminoaspartate with dihydroxyacetone phosphate to form quinolinate. The protein is Quinolinate synthase of Neisseria meningitidis serogroup C (strain 053442).